Consider the following 185-residue polypeptide: 3-hydroxyanthranilate 3,4-dioxygenase (185 aa).

Arg44 contributes to the O2 binding site. Positions 48, 54, and 95 each coordinate Fe cation. Substrate is bound at residue Glu54. Substrate contacts are provided by Arg99 and Glu109. The a divalent metal cation site is built by Cys124, Cys127, Cys161, and Cys164.

The protein belongs to the 3-HAO family. Requires Fe(2+) as cofactor.

The protein resides in the cytoplasm. The enzyme catalyses 3-hydroxyanthranilate + O2 = (2Z,4Z)-2-amino-3-carboxymuconate 6-semialdehyde. Its pathway is cofactor biosynthesis; NAD(+) biosynthesis; quinolinate from L-kynurenine: step 3/3. Catalyzes the oxidative ring opening of 3-hydroxyanthranilate to 2-amino-3-carboxymuconate semialdehyde, which spontaneously cyclizes to quinolinate. The polypeptide is 3-hydroxyanthranilate 3,4-dioxygenase (Podospora anserina (strain S / ATCC MYA-4624 / DSM 980 / FGSC 10383) (Pleurage anserina)).